The following is a 121-amino-acid chain: MGRIFLDHIGGTRLFSCANCDAILTNRSELISTRFTGATGRAFLFNKVVNLQYSEVQDRVMLTGRHMVRDVSCKNCNSKLGWIYEFATEDSQRYKEGRVILERALVRESEGFEEHVPSDNS.

The 98-residue stretch at 13–110 folds into the Yippee domain; that stretch reads RLFSCANCDA…LERALVRESE (98 aa). Zn(2+)-binding residues include Cys17, Cys20, Cys73, and Cys76. Ser118 bears the Phosphoserine mark.

It belongs to the yippee family. As to quaternary structure, identified in the CTLH complex that contains GID4, RANBP9 and/or RANBP10, MKLN1, MAEA, RMND5A (or alternatively its paralog RMND5B), GID8, ARMC8, WDR26 and YPEL5. Within this complex, MAEA, RMND5A (or alternatively its paralog RMND5B), GID8, WDR26, and RANBP9 and/or RANBP10 form the catalytic core, while GID4, MKLN1, ARMC8 and YPEL5 have ancillary roles. Interacts with RANBP9 and RANBP10.

The protein localises to the nucleus. Its subcellular location is the cytoplasm. It localises to the cytoskeleton. The protein resides in the microtubule organizing center. It is found in the centrosome. The protein localises to the spindle pole. Its subcellular location is the midbody. Functionally, component of the CTLH E3 ubiquitin-protein ligase complex that selectively accepts ubiquitin from UBE2H and mediates ubiquitination and subsequent proteasomal degradation of the transcription factor HBP1. Required for normal cell proliferation. The polypeptide is Protein yippee-like 5 (YPEL5) (Macaca fascicularis (Crab-eating macaque)).